The following is a 296-amino-acid chain: Phosphatidylglycerol--prolipoprotein diacylglyceryl transferase (296 aa).

The next 3 membrane-spanning stretches (helical) occupy residues 17–37 (LAVR…IVVG), 59–79 (MMFY…VLFY), and 97–117 (GGMS…LFAW). Position 142 (Arg-142) interacts with a 1,2-diacyl-sn-glycero-3-phospho-(1'-sn-glycerol). Helical transmembrane passes span 230 to 250 (MGAV…TVEF) and 257 to 277 (FLGL…PMIL).

Belongs to the Lgt family.

It is found in the cell inner membrane. The catalysed reaction is L-cysteinyl-[prolipoprotein] + a 1,2-diacyl-sn-glycero-3-phospho-(1'-sn-glycerol) = an S-1,2-diacyl-sn-glyceryl-L-cysteinyl-[prolipoprotein] + sn-glycerol 1-phosphate + H(+). Its pathway is protein modification; lipoprotein biosynthesis (diacylglyceryl transfer). In terms of biological role, catalyzes the transfer of the diacylglyceryl group from phosphatidylglycerol to the sulfhydryl group of the N-terminal cysteine of a prolipoprotein, the first step in the formation of mature lipoproteins. The polypeptide is Phosphatidylglycerol--prolipoprotein diacylglyceryl transferase (Burkholderia lata (strain ATCC 17760 / DSM 23089 / LMG 22485 / NCIMB 9086 / R18194 / 383)).